The sequence spans 257 residues: Paired box protein 1 homolog (257 aa).

Positions 26–37 (TTPSSTSTTPSS) are enriched in low complexity. The segment at 26–58 (TTPSSTSTTPSSDNGIQQYSSISTSSGYAPANS) is disordered. Residues 38-52 (DNGIQQYSSISTSSG) are compositionally biased toward polar residues. Positions 61–187 (KTAEVNQLGG…SSISRILRNK (127 aa)) form a DNA-binding region, paired. Residues 64 to 120 (EVNQLGGVFVNGRPLPFEMRCKIVELSRQGTRPCDISRQLKISHGCVSKILTRFSEN) form a PAI subdomain region. The tract at residues 139-187 (KVVEYIRSLKRSDPGIFAWEIRDRLISADICDRANLPSVSSISRILRNK) is RED subdomain.

It localises to the nucleus. Functionally, transcription factor. May play a role in pharyngeal cell differentiation. May have a protective role in response to infection by the Gram-negative bacterium Vibrio cholerae. The sequence is that of Paired box protein 1 homolog from Caenorhabditis elegans.